The chain runs to 965 residues: UvrABC system protein A (965 aa).

32–39 (GLSGSGKS) contacts ATP. A C4-type zinc finger spans residues 254–281 (CPVCDYSLPELEPRLFSFNAPMGACPAC). ABC transporter domains follow at residues 311–588 (WDRR…PRSL) and 608–937 (PNAT…HFLA). 641 to 648 (GVSGSGKS) provides a ligand contact to ATP. The C4-type zinc-finger motif lies at 740–766 (CEACEGDGLIKVEMHFLPDVYVPCDIC).

Belongs to the ABC transporter superfamily. UvrA family. In terms of assembly, forms a heterotetramer with UvrB during the search for lesions.

Its subcellular location is the cytoplasm. In terms of biological role, the UvrABC repair system catalyzes the recognition and processing of DNA lesions. UvrA is an ATPase and a DNA-binding protein. A damage recognition complex composed of 2 UvrA and 2 UvrB subunits scans DNA for abnormalities. When the presence of a lesion has been verified by UvrB, the UvrA molecules dissociate. This is UvrABC system protein A from Xylella fastidiosa (strain Temecula1 / ATCC 700964).